The following is a 517-amino-acid chain: Mucin-like protein 3 (517 aa).

An N-terminal signal peptide occupies residues 1–29 (MAQPVHSLCSAFGLQCCLLFLLASWGAGA). At 30-448 (TTFQEYQKTG…GENDSFPAWA (419 aa)) the chain is on the extracellular side. Positions 67 to 341 (SGQRPPELPK…PTENLGNTTL (275 aa)) are disordered. Over residues 83 to 93 (QKRHCNTTRHS) the composition is skewed to basic residues. Residue N88 is glycosylated (N-linked (GlcNAc...) asparagine). Over residues 105–116 (TIDHKSSTDNHE) the composition is skewed to basic and acidic residues. N124 carries an N-linked (GlcNAc...) asparagine glycan. Positions 169-179 (RKSTTGKSTVT) are enriched in polar residues. The span at 180–190 (RKSDKTGRPLE) shows a compositional bias: basic and acidic residues. Residues 194–213 (STLDKTSTSSHKTTTSFHNS) are compositionally biased toward low complexity. Polar residues-rich tracts occupy residues 214-225 (GNSQTKQKSTSF), 232-243 (ASKTTYKTTGTP), and 263-283 (TKTT…QSLA). Over residues 305-317 (TENRERTANENKK) the composition is skewed to basic and acidic residues. N-linked (GlcNAc...) asparagine glycosylation occurs at N338. The chain crosses the membrane as a helical span at residues 449–469 (IVIVVLVAVILLLVFLGLIFL). Residues 470–517 (VSYMMRTRRTLTQNTQYNDAEDEGGPNSYPVYLMEQQNLGMGQIPSPR) lie on the Cytoplasmic side of the membrane.

Detected in lung, esophagus, stomach, rectum, skin, cervix, testis, kidney, uterus and small intestine. Expressed in pancreas (at protein level).

It localises to the cell membrane. Its subcellular location is the cytoplasm. Its function is as follows. May modulate NF-kappaB signaling and play a role in cell growth. This Homo sapiens (Human) protein is Mucin-like protein 3.